Reading from the N-terminus, the 63-residue chain is MIVVPVKEGENIERALKRFKRKFEKTGAVRELRARQAFEKPSVAKRKKMQKAIYMKQLQVAEE.

Belongs to the bacterial ribosomal protein bS21 family.

The polypeptide is Small ribosomal subunit protein bS21 (Porphyromonas gingivalis (strain ATCC 33277 / DSM 20709 / CIP 103683 / JCM 12257 / NCTC 11834 / 2561)).